Here is a 187-residue protein sequence, read N- to C-terminus: Anterior gradient protein 1 (187 aa).

A signal peptide spans 1-20; it reads MQTGLSLVCLVLLCSALGEA.

This sequence belongs to the AGR family.

The protein localises to the secreted. Its function is as follows. Probably involved in cement gland formation. This is Anterior gradient protein 1 (ag1) from Xenopus tropicalis (Western clawed frog).